A 99-amino-acid chain; its full sequence is Virion membrane protein OPG135 (99 aa).

Positions 1–22 are cleaved as a signal peptide; sequence MSCYTAILKSVGGLALFQVANG. Residues 23–45 are Intravirion-facing; sequence AIDLCRHFFMYFCEQKLRPNSFW. Residues 46–66 form a helical membrane-spanning segment; that stretch reads FVVVRAIASMIMYLVLGIALL. At 67–83 the chain is on the virion surface side; it reads YISEQDDKKNTNNDGSN. Residues 73–89 are compositionally biased toward basic and acidic residues; that stretch reads DKKNTNNDGSNNDKRNE. The tract at residues 73 to 99 is disordered; it reads DKKNTNNDGSNNDKRNESSINSNSSPK. Residue N88 is glycosylated (N-linked (GlcNAc...) asparagine; by host). Residues 90 to 99 are compositionally biased toward polar residues; sequence SSINSNSSPK.

It belongs to the oerthopoxvirus OPG135 family.

The protein localises to the virion membrane. The protein resides in the host cytoplasm. Envelope protein. Required for an early step in virion morphogenesis. The sequence is that of Virion membrane protein OPG135 (OPG135) from Homo sapiens (Human).